We begin with the raw amino-acid sequence, 169 residues long: uncharacterized protein (169 aa).

This is an uncharacterized protein from Methanocaldococcus jannaschii (strain ATCC 43067 / DSM 2661 / JAL-1 / JCM 10045 / NBRC 100440) (Methanococcus jannaschii).